The primary structure comprises 494 residues: Protein translocase subunit SecD (494 aa).

6 consecutive transmembrane segments (helical) span residues 7 to 27, 322 to 342, 345 to 365, 372 to 392, 420 to 440, and 441 to 461; these read WFALLIALVISAFLLCINLPF, LIAALLGLSLVAIFMVSFYRL, FIAIFALSFYALFNIAIYALI, PGVAGFVLSIGMAVDANVLIF, IIDGHITTLISCISLFYLGTG, and FVKGFAATLGIGVFISLFTAL.

Belongs to the SecD/SecF family. SecD subfamily. In terms of assembly, forms a complex with SecF. Part of the essential Sec protein translocation apparatus which comprises SecA, SecYEG and auxiliary proteins SecDF. Other proteins may also be involved.

It is found in the cell inner membrane. In terms of biological role, part of the Sec protein translocase complex. Interacts with the SecYEG preprotein conducting channel. SecDF uses the proton motive force (PMF) to complete protein translocation after the ATP-dependent function of SecA. Its function is as follows. Probably participates in protein translocation into and across both the cytoplasmic and thylakoid membranes in cyanobacterial cells. This chain is Protein translocase subunit SecD, found in Prochlorococcus marinus (strain SARG / CCMP1375 / SS120).